The sequence spans 284 residues: S-formylglutathione hydrolase (284 aa).

Residue Ala2 is modified to N-acetylalanine. Residues Asn63 and Lys67 each contribute to the substrate site. Residues Ser152, Asp229, and His262 each act as charge relay system in the active site.

Belongs to the esterase D family. As to quaternary structure, homodimer.

It catalyses the reaction S-formylglutathione + H2O = formate + glutathione + H(+). Its activity is regulated as follows. Activity toward p-nitrophenyl acetate inhibited by N-ethylmaleimide, 10-(fluoroethoxyphosphinyl)-N-(biotinamidopentyl)decanamide (FP-biotin), iodoacetamide, CuCl(2) and ZnSO(4), but not by phenylmethylsulfonyl fluoride, EDTA, Mg(2+), Mn(2+), Ca(2+) or paraoxon, an organo-phosphate inhibitor of serine hydrolases. In terms of biological role, serine hydrolase which catalyzes the hydrolysis of S-formylglutathione to glutathione and formic acid. Also hydrolyzes S-acetylglutathione and a range of carboxyesters in vitro. Involved in the detoxification of formaldehyde. This is S-formylglutathione hydrolase (SFGH) from Arabidopsis thaliana (Mouse-ear cress).